Here is a 90-residue protein sequence, read N- to C-terminus: Evasin P458 (90 aa).

Positions 1–24 (MEVKTFAFLQIAVLIAFSLHSASA) are cleaved as a signal peptide. Cystine bridges form between Cys44-Cys63, Cys48-Cys65, and Cys59-Cys76. An N-linked (GlcNAc...) asparagine glycan is attached at Asn47.

The protein localises to the secreted. In terms of biological role, salivary chemokine-binding protein which binds to host chemokines CXCL1, CXCL2, CXCL3, CXCL5, CXCL6 and CXCL13. The sequence is that of Evasin P458 from Ixodes ricinus (Common tick).